Reading from the N-terminus, the 77-residue chain is Acyl carrier protein (77 aa).

Positions 2 to 77 (SSIEKRVKEI…DAIDYITEHT (76 aa)) constitute a Carrier domain. Serine 37 is modified (O-(pantetheine 4'-phosphoryl)serine).

The protein belongs to the acyl carrier protein (ACP) family. In terms of processing, 4'-phosphopantetheine is transferred from CoA to a specific serine of apo-ACP by AcpS. This modification is essential for activity because fatty acids are bound in thioester linkage to the sulfhydryl of the prosthetic group.

The protein resides in the cytoplasm. It functions in the pathway lipid metabolism; fatty acid biosynthesis. Functionally, carrier of the growing fatty acid chain in fatty acid biosynthesis. The protein is Acyl carrier protein of Geobacter sulfurreducens (strain ATCC 51573 / DSM 12127 / PCA).